Consider the following 467-residue polypeptide: F-box protein pof9 (467 aa).

Positions 3 to 49 constitute an F-box domain; that stretch reads KSPFLELSYDILLEISTYLDYKDIVHLSETCKSLSYVFDDKTIWHRF. RCC1 repeat units follow at residues 77–131, 302–354, and 355–417; these read RGYA…LLNE, ETFT…YLTS, and DHSI…AAGG.

As to quaternary structure, interacts with skp1.

The protein resides in the cytoplasm. It localises to the nucleus. The sequence is that of F-box protein pof9 (pof9) from Schizosaccharomyces pombe (strain 972 / ATCC 24843) (Fission yeast).